The sequence spans 330 residues: Phospholipase C (330 aa).

The N-terminal stretch at 1–34 is a signal peptide; that stretch reads MVKKTKSNSLKKVATLALANLLLVGALTDNSAKA. A disulfide bridge connects residues cysteine 155 and cysteine 191.

It belongs to the neutral sphingomyelinase family. Monomer.

The protein resides in the secreted. The catalysed reaction is a 1,2-diacyl-sn-glycero-3-phosphocholine + H2O = phosphocholine + a 1,2-diacyl-sn-glycerol + H(+). Functionally, bacterial hemolysins are exotoxins that attack blood cell membranes and cause cell rupture. Beta-hemolysin is a phospholipase C with specific activity toward sphingomyelins. Has a high specificity for sphingomyelin, hydrolyzes lysophosphatidylcholine at a much lower rate, but has no activity towards phosphatidylcholine, phosphatidylethanolamine, or phosphatidylserine. This Staphylococcus aureus (strain NCTC 8325 / PS 47) protein is Phospholipase C (hlb).